Reading from the N-terminus, the 324-residue chain is Ribose 1,5-bisphosphate isomerase (324 aa).

Substrate is bound by residues 22-25 (RGAG) and arginine 65. Catalysis depends on cysteine 135, which acts as the Proton acceptor. 137–139 (SKA) is a binding site for substrate. Aspartate 204 (proton donor) is an active-site residue. Residues 214–215 (NK) and lysine 240 each bind substrate.

It belongs to the eIF-2B alpha/beta/delta subunits family. R15P isomerase subfamily.

The catalysed reaction is alpha-D-ribose 1,5-bisphosphate = D-ribulose 1,5-bisphosphate. In terms of biological role, catalyzes the isomerization of ribose 1,5-bisphosphate (R15P) to ribulose 1,5-bisphosphate (RuBP), the CO(2) acceptor and substrate for RubisCO. Functions in an archaeal AMP degradation pathway, together with AMP phosphorylase and RubisCO. In Pyrococcus horikoshii (strain ATCC 700860 / DSM 12428 / JCM 9974 / NBRC 100139 / OT-3), this protein is Ribose 1,5-bisphosphate isomerase.